The primary structure comprises 340 residues: DNA-directed RNA polymerase subunit alpha (340 aa).

An alpha N-terminal domain (alpha-NTD) region spans residues 1–238; the sequence is MADTFVAKNW…EQLTVFVNFD (238 aa). Residues 253-340 form an alpha C-terminal domain (alpha-CTD) region; sequence AKLNENLFRS…QAPAPAQPKA (88 aa).

Belongs to the RNA polymerase alpha chain family. Homodimer. The RNAP catalytic core consists of 2 alpha, 1 beta, 1 beta' and 1 omega subunit. When a sigma factor is associated with the core the holoenzyme is formed, which can initiate transcription.

It catalyses the reaction RNA(n) + a ribonucleoside 5'-triphosphate = RNA(n+1) + diphosphate. In terms of biological role, DNA-dependent RNA polymerase catalyzes the transcription of DNA into RNA using the four ribonucleoside triphosphates as substrates. This chain is DNA-directed RNA polymerase subunit alpha, found in Myxococcus xanthus (strain DK1622).